Reading from the N-terminus, the 102-residue chain is Alpha-ketoglutarate dehydrogenase component 4 (102 aa).

At glycine 2 the chain carries N-acetylglycine. Lysine 4 bears the N6-succinyllysine mark. The interval 23–70 (KFPNRRDKPKLSASEALGSAALPSHSSAISQHSKGSTSPDLLMHQGPP) is disordered. Low complexity predominate over residues 33 to 46 (LSASEALGSAALPS). Positions 47-61 (HSSAISQHSKGSTSP) are enriched in polar residues. Phosphoserine occurs at positions 48, 60, and 89.

It belongs to the alpha-ketoglutarate dehydrogenase component 4 family. In terms of assembly, component of the 2-oxoglutarate dehydrogenase complex (OGDHC), composed of OGDH (2-oxoglutarate dehydrogenase; also called E1 subunit), DLST (dihydrolipoamide succinyltransferase; also called E2 subunit) and DLD (dihydrolipoamide dehydrogenase; also called E3 subunit), and the assembly factor KGD4. Within OGDHC complex, interacts (via N-terminus) with E3 subunit and (via C-terminus) with E2 subunit.

Its subcellular location is the mitochondrion. Its function is as follows. Molecular adapter that is necessary to form a stable 2-oxoglutarate dehydrogenase enzyme complex (OGDHC). Enables the specific recruitment of E3 subunit to E2 subunit in the 2-oxoglutarate dehydrogenase complex (OGDHC). The polypeptide is Alpha-ketoglutarate dehydrogenase component 4 (Mus musculus (Mouse)).